The primary structure comprises 363 residues: MKLHEENNKALFEAMRNRENPTKWESYKQVITAVSAYWVFSIGLVFLNKYLLSSVQLDAPLFITWYQCLVTVFLCLFLSKTSKAYGLFKFPSMPIDAKISREVLPLSVVFVAMISFNNLCLKYVGVSFYYVGRSLTTVFNVVCTYLILGQKTSGQAIGCCALIIFGFLLGVDQEGVTGTLSYTGVIFGVLASLSVALNAIYTRKVLSSVGDCLWRLTMYNNLNALVLFLPLMLFNGEFGAVFYFDKLFDTTFWILMTLGGVFGFMMGYVTGWQIQATSPLTHNISGTAKAAAQTVMAVVWYSELKTLLWWTSNFVVLFGSGMYTYVQKRVMDKKNSGASPASEAKSDKVKLLGRDGNAAEESV.

The next 8 helical transmembrane spans lie at 30–47 (VITAVSAYWVFSIGLVFL), 62–79 (FITWYQCLVTVFLCLFLS), 126–148 (VSFYYVGRSLTTVFNVVCTYLIL), 152–171 (TSGQAIGCCALIIFGFLLGV), 180–202 (LSYTGVIFGVLASLSVALNAIYT), 222–244 (LNALVLFLPLMLFNGEFGAVFYF), 251–273 (TFWILMTLGGVFGFMMGYVTGWQ), and 307–326 (LLWWTSNFVVLFGSGMYTYV). A disordered region spans residues 334–363 (KNSGASPASEAKSDKVKLLGRDGNAAEESV). Basic and acidic residues predominate over residues 344–353 (AKSDKVKLLG).

It belongs to the TPT transporter family. SLC35C subfamily.

It is found in the golgi apparatus membrane. Its function is as follows. Involved in GDP-fucose import from the cytoplasm into the Golgi lumen. The polypeptide is GDP-fucose transporter (Caenorhabditis elegans).